A 1604-amino-acid chain; its full sequence is Ubiquitin carboxyl-terminal hydrolase 32 (1604 aa).

EF-hand domains lie at 91-126 (KDEE…VDGK), 228-263 (IRPS…CCRG), and 264-299 (PLAE…LLEV). 9 residues coordinate Ca(2+): aspartate 241, asparagine 243, aspartate 245, histidine 247, glutamate 252, aspartate 277, aspartate 279, aspartate 281, and glutamate 288. A DUSP domain is found at 369–585 (ATPEEEGQII…ANLALPRPVI (217 aa)). In terms of domain architecture, USP spans 734–1567 (TGLSNLGNTC…SAYILFYEQQ (834 aa)). Catalysis depends on cysteine 743, which acts as the Nucleophile. Tyrosine 1173 carries the phosphotyrosine modification. Disordered stretches follow at residues 1343 to 1362 (KKVD…SKSP) and 1367 to 1431 (ANII…DASK). Phosphoserine is present on residues serine 1350, serine 1372, serine 1376, and serine 1454. The span at 1367 to 1399 (ANIISSPKGSPSSSRKSGTSCPSSKNSSPNSSP) shows a compositional bias: low complexity. Histidine 1526 (proton acceptor) is an active-site residue. At serine 1588 the chain carries Phosphoserine. The residue at position 1601 (cysteine 1601) is a Cysteine methyl ester. Cysteine 1601 carries the S-farnesyl cysteine lipid modification. A propeptide spans 1602–1604 (VLQ) (removed in mature form).

The protein belongs to the peptidase C19 family.

It is found in the golgi apparatus membrane. The catalysed reaction is Thiol-dependent hydrolysis of ester, thioester, amide, peptide and isopeptide bonds formed by the C-terminal Gly of ubiquitin (a 76-residue protein attached to proteins as an intracellular targeting signal).. Functionally, deubiquitinase that can remove conjugated ubiquitin from target proteins, such as RAB7A and LAMTOR1. Acts as a positive regulator of the mTORC1 signaling by mediating deubiquitination of LAMTOR1, thereby promoting the association between LAMTOR1 and the lysosomal V-ATPase complex and subsequent activation of the mTORC1 complex. The chain is Ubiquitin carboxyl-terminal hydrolase 32 (USP32) from Homo sapiens (Human).